A 239-amino-acid polypeptide reads, in one-letter code: Ribosomal RNA small subunit methyltransferase G (239 aa).

S-adenosyl-L-methionine-binding positions include G77, F82, 128 to 129, and R146; that span reads AE. Residues 215-239 are disordered; the sequence is DKRSQTPKKYPRKPGTPNKSPLLEK.

It belongs to the methyltransferase superfamily. RNA methyltransferase RsmG family.

Its subcellular location is the cytoplasm. Functionally, specifically methylates the N7 position of guanine in position 535 of 16S rRNA. The chain is Ribosomal RNA small subunit methyltransferase G from Staphylococcus saprophyticus subsp. saprophyticus (strain ATCC 15305 / DSM 20229 / NCIMB 8711 / NCTC 7292 / S-41).